A 406-amino-acid polypeptide reads, in one-letter code: Tryptophan synthase beta chain (406 aa).

The residue at position 99 (Lys-99) is an N6-(pyridoxal phosphate)lysine.

The protein belongs to the TrpB family. As to quaternary structure, tetramer of two alpha and two beta chains. The cofactor is pyridoxal 5'-phosphate.

It carries out the reaction (1S,2R)-1-C-(indol-3-yl)glycerol 3-phosphate + L-serine = D-glyceraldehyde 3-phosphate + L-tryptophan + H2O. It functions in the pathway amino-acid biosynthesis; L-tryptophan biosynthesis; L-tryptophan from chorismate: step 5/5. Its function is as follows. The beta subunit is responsible for the synthesis of L-tryptophan from indole and L-serine. This is Tryptophan synthase beta chain from Rhizobium johnstonii (strain DSM 114642 / LMG 32736 / 3841) (Rhizobium leguminosarum bv. viciae).